Reading from the N-terminus, the 298-residue chain is 4-hydroxy-tetrahydrodipicolinate synthase (298 aa).

Threonine 48 contributes to the pyruvate binding site. Catalysis depends on tyrosine 137, which acts as the Proton donor/acceptor. Lysine 166 acts as the Schiff-base intermediate with substrate in catalysis. Isoleucine 207 is a binding site for pyruvate.

This sequence belongs to the DapA family. In terms of assembly, homotetramer; dimer of dimers.

It is found in the cytoplasm. It catalyses the reaction L-aspartate 4-semialdehyde + pyruvate = (2S,4S)-4-hydroxy-2,3,4,5-tetrahydrodipicolinate + H2O + H(+). It functions in the pathway amino-acid biosynthesis; L-lysine biosynthesis via DAP pathway; (S)-tetrahydrodipicolinate from L-aspartate: step 3/4. In terms of biological role, catalyzes the condensation of (S)-aspartate-beta-semialdehyde [(S)-ASA] and pyruvate to 4-hydroxy-tetrahydrodipicolinate (HTPA). The polypeptide is 4-hydroxy-tetrahydrodipicolinate synthase (Campylobacter jejuni subsp. jejuni serotype O:6 (strain 81116 / NCTC 11828)).